The following is a 127-amino-acid chain: uncharacterized protein (127 aa).

This is an uncharacterized protein from Archaeoglobus fulgidus (strain ATCC 49558 / DSM 4304 / JCM 9628 / NBRC 100126 / VC-16).